The chain runs to 30 residues: Cyclotide cycloviolacin O17 (30 aa).

Positions 1 to 30 (GIPCGESCVWIPCISAAIGCSCKNKVCYRN) form a cross-link, cyclopeptide (Gly-Asn). 3 cysteine pairs are disulfide-bonded: Cys-4-Cys-20, Cys-8-Cys-22, and Cys-13-Cys-27.

Post-translationally, this is a cyclic peptide.

Probably participates in a plant defense mechanism. The polypeptide is Cyclotide cycloviolacin O17 (Psychotria brachyceras).